The following is a 270-amino-acid chain: MELPNIMHPVAKLSTALAAALMLSGCMPGEIRPTIGQQMETGDQRFGDLVFRQLAPNVWQHTSYLDMPGFGAVASNGLIVRDGGRVLVVDTAWTDDQTAQILNWIKQEINLPVALAVVTHAHQDKMGGMDALHAAGIATYANALSNQLAPQEGMVAAQHSLTFAANGWVEPATAPNFGPLKVFYPGPGHTSDNITVGIDGTDIAFGGCLIKDSKAKSLGNLGDADTEHYAASARAFGAAFPKASMIVMSHSAPDSRAAITHTARMADKLR.

The N-terminal stretch at 1–28 (MELPNIMHPVAKLSTALAAALMLSGCMP) is a signal peptide. Zn(2+)-binding residues include His120, His122, Asp124, His189, and Cys208. Substrate contacts are provided by Lys211 and Asn220. His250 is a Zn(2+) binding site.

This sequence belongs to the metallo-beta-lactamase superfamily. Class-B beta-lactamase family. Monomer. It depends on Zn(2+) as a cofactor.

It is found in the periplasm. The enzyme catalyses a beta-lactam + H2O = a substituted beta-amino acid. Inhibits by captopril, thiorphan, dimercaprol and tiopronin. This enzyme is not susceptible to inactivation by the beta-lactamase-blocking agents clavulanic acid. Functionally, confers resistance to the different beta-lactams antibiotics (penicillin, cephalosporin and carbapenem) via the hydrolysis of the beta-lactam ring. Does not confer resistance to the polymixin colistin or the fluoroquinolone ciprofloxacin. The sequence is that of Metallo-beta-lactamase type 2 from Klebsiella pneumoniae.